A 91-amino-acid chain; its full sequence is Small ribosomal subunit protein uS19 (91 aa).

The protein belongs to the universal ribosomal protein uS19 family.

Functionally, protein S19 forms a complex with S13 that binds strongly to the 16S ribosomal RNA. The sequence is that of Small ribosomal subunit protein uS19 from Laribacter hongkongensis (strain HLHK9).